The sequence spans 599 residues: Beta-(1--&gt;2)glucan export ATP-binding/permease protein NdvA (599 aa).

The ABC transmembrane type-1 domain maps to 21–301 (TITMCVASVL…ISAFINQTVT (281 aa)). A run of 5 helical transmembrane segments spans residues 22–42 (ITMCVASVLVALVTLAEPVLF), 55–75 (IFSPLLMWAALGGFNIMAAVF), 156–176 (MRMSLVLIVLGVIYVMIGQLV), 248–268 (MASTFSMVVVLVLGAYFVTKG), and 276–296 (IAFIGFAQLMIGRLDQISAFI). An ABC transporter domain is found at 335–569 (IVFDNVTYEF…GGRFSDLLRA (235 aa)). 368–375 (GPTGAGKT) contacts ATP.

The protein belongs to the ABC transporter superfamily. Beta-(1--&gt;2)glucan exporter (TC 3.A.1.108.1) family. As to quaternary structure, homodimer.

It localises to the cell inner membrane. It catalyses the reaction [(1-&gt;2)-beta-D-glucosyl](n)(in) + ATP + H2O = [(1-&gt;2)-beta-D-glucosyl](n)(out) + ADP + phosphate + H(+). Functionally, involved in beta-(1--&gt;2)glucan export. Its export to the periplasmic space is required to exert its action as a virulence factor. Transmembrane domains (TMD) form a pore in the inner membrane and the ATP-binding domain (NBD) is responsible for energy generation. This Brucella abortus (strain 2308) protein is Beta-(1--&gt;2)glucan export ATP-binding/permease protein NdvA.